We begin with the raw amino-acid sequence, 105 residues long: Met repressor (105 aa).

It belongs to the MetJ family. Homodimer.

The protein resides in the cytoplasm. This regulatory protein, when combined with SAM (S-adenosylmethionine) represses the expression of the methionine regulon and of enzymes involved in SAM synthesis. This chain is Met repressor, found in Haemophilus influenzae (strain 86-028NP).